Here is a 360-residue protein sequence, read N- to C-terminus: MTVPKFKKFKIEAYKPGKSNIAKIRNIIKLSANESALGVSPRVKKILQNKKLLISKYPDGKAKNLRKEISKKFKCDFERIICGAGSDEIIQMICQLYLKPSDEVIVPQYSFLMYRIYAQIVGAKVVFSKEKNFKVSINEIIKKVTRKTKLVFIANPNNPTGTYLTRAELIDLRKKLNKNILLVLDDAYFEYMKNKDYKSGLDLFKNKDNVVVIRTFSKIYGLASLRVGWGHGPKKIISAMNLIRPPFNVNQVAQMAAIEALKDRKFINNSVKHNIREANKVRNALQKLKILSNEVTANFLLLNFDRCKFSANYIFNKLQSKGIILRSTEDGYNIKNKLRLTIGSTKENMRFITTIKAIFN.

At Lys-218 the chain carries N6-(pyridoxal phosphate)lysine.

This sequence belongs to the class-II pyridoxal-phosphate-dependent aminotransferase family. Histidinol-phosphate aminotransferase subfamily. Homodimer. Pyridoxal 5'-phosphate serves as cofactor.

The enzyme catalyses L-histidinol phosphate + 2-oxoglutarate = 3-(imidazol-4-yl)-2-oxopropyl phosphate + L-glutamate. The protein operates within amino-acid biosynthesis; L-histidine biosynthesis; L-histidine from 5-phospho-alpha-D-ribose 1-diphosphate: step 7/9. This Pelagibacter ubique (strain HTCC1062) protein is Histidinol-phosphate aminotransferase.